Reading from the N-terminus, the 822-residue chain is Valine--tRNA ligase (822 aa).

The short motif at 41-51 is the 'HIGH' region element; it reads PNVTGQLHLGH. A 'KMSKS' region motif is present at residues 511 to 515; sequence KMSKS. K514 is an ATP binding site. The stretch at 765 to 822 forms a coiled coil; it reads EQKGRELKEIQFLKSEILRAEKILTNKGFLEKAPREKIDLERTKLEKLKEKLVFYEKK.

It belongs to the class-I aminoacyl-tRNA synthetase family. ValS type 1 subfamily. Monomer.

The protein resides in the cytoplasm. The enzyme catalyses tRNA(Val) + L-valine + ATP = L-valyl-tRNA(Val) + AMP + diphosphate. Catalyzes the attachment of valine to tRNA(Val). As ValRS can inadvertently accommodate and process structurally similar amino acids such as threonine, to avoid such errors, it has a 'posttransfer' editing activity that hydrolyzes mischarged Thr-tRNA(Val) in a tRNA-dependent manner. This Mesomycoplasma hyopneumoniae (strain J / ATCC 25934 / NCTC 10110) (Mycoplasma hyopneumoniae) protein is Valine--tRNA ligase.